The following is a 483-amino-acid chain: MMTNATGERNLALIQEVLEVFPETARKERRKHMMVSDPKMKSVGKCIISNRKSQPGVMTVRGCAYAGSKGVVFGPIKDMAHISHGPAGCGQYSRAERRNYYTGVSGVDSFGTLNFTSDFQERDIVFGGDKKLSKLIEEMELLFPLTKGITIQSECPVGLIGDDISAVANASSKALDKPVIPVRCEGFRGVSQSLGHHIANDVVRDWILNNREGQPFETTPYDVAIIGDYNIGGDAWASRILLEEMGLRVVAQWSGDGTLVEMENTPFVKLNLVHCYRSMNYIARHMEEKHQIPWMEYNFFGPTKIAESLRKIADQFDDTIRANAEAVIARYEGQMAAIIAKYRPRLEGRKVLLYMGGLRPRHVIGAYEDLGMEIIAAGYEFAHNDDYDRTLPDLKEGTLLFDDASSYELEAFVKALKPDLIGSGIKEKYIFQKMGVPFRQMHSWDYSGPYHGYDGFAIFARDMDMTLNNPAWNELTAPWLKSA.

Cysteine 63, cysteine 89, and cysteine 155 together coordinate [8Fe-7S] cluster. Cysteine 275 and histidine 442 together coordinate [7Fe-Mo-9S-C-homocitryl] cluster.

Belongs to the NifD/NifK/NifE/NifN family. In terms of assembly, tetramer of two alpha and two beta chains. Forms complex with the iron protein (nitrogenase component 2). [8Fe-7S] cluster is required as a cofactor. [7Fe-Mo-9S-C-homocitryl] cluster serves as cofactor.

The enzyme catalyses N2 + 8 reduced [2Fe-2S]-[ferredoxin] + 16 ATP + 16 H2O = H2 + 8 oxidized [2Fe-2S]-[ferredoxin] + 2 NH4(+) + 16 ADP + 16 phosphate + 6 H(+). Functionally, this molybdenum-iron protein is part of the nitrogenase complex that catalyzes the key enzymatic reactions in nitrogen fixation. The sequence is that of Nitrogenase molybdenum-iron protein alpha chain (nifD) from Klebsiella pneumoniae.